The following is a 538-amino-acid chain: uncharacterized protein (538 aa).

Positions 1 to 17 (MSFSATILFSPPSGSEA) are cleaved as a signal peptide. Residues 101-131 (RQGKVSIPDEDGESRAHSSPPEEPGPLKESP) form a disordered region. Residues Lys128 and Lys221 each participate in a glycyl lysine isopeptide (Lys-Gly) (interchain with G-Cter in SUMO2) cross-link. Ser224 bears the Phosphoserine mark. The segment at 233 to 253 (RATPETGPENGTKLPPPRPED) is disordered. 2 positions are modified to phosphoserine: Ser285 and Ser428. The disordered stretch occupies residues 488-523 (LPPELYNPNFQEEEDEGGDENAPGSPSFDQPHKTCC).

The protein resides in the secreted. This is an uncharacterized protein from Homo sapiens (Human).